The sequence spans 108 residues: MGVQVETISSGDGRTFPKRGQTCVVHYTGMLEDGKKFDSSRDRNKPFKFTLGKQEVIRGWEEGVAQMSVGQRAKLIISPDYAYGATGHPGIIPPHATLVFDVELLKLE.

S10 carries the post-translational modification Phosphoserine. The PPIase FKBP-type domain maps to 20 to 108 (GQTCVVHYTG…VFDVELLKLE (89 aa)). An N6-acetyllysine; alternate modification is found at K53. At K53 the chain carries N6-succinyllysine; alternate.

It belongs to the FKBP-type PPIase family. FKBP1 subfamily. As to quaternary structure, interacts with TGFBR1; prevents TGFBR1 phosphorylation by TGFBR2 and stabilizes it in the inactive conformation. Interacts with ACVR1B and SMAD7. Identified in a complex composed of RYR1, PDE4D, PKA, FKBP1A and protein phosphatase 1 (PP1). Interacts directly with RYR2. Interacts directly with RYR3. Interacts directly with RYR1. Interacts with GLMN; rapamycin and FK506 abolish the interaction with GLMN in a dose dependent manner. Ubiquitous.

The protein resides in the cytoplasm. It localises to the cytosol. Its subcellular location is the sarcoplasmic reticulum membrane. The catalysed reaction is [protein]-peptidylproline (omega=180) = [protein]-peptidylproline (omega=0). With respect to regulation, inhibited by both FK506 and rapamycin. Functionally, keeps in an inactive conformation TGFBR1, the TGF-beta type I serine/threonine kinase receptor, preventing TGF-beta receptor activation in absence of ligand. Recruits SMAD7 to ACVR1B which prevents the association of SMAD2 and SMAD3 with the activin receptor complex, thereby blocking the activin signal. May modulate the RYR1 calcium channel activity. PPIases accelerate the folding of proteins. It catalyzes the cis-trans isomerization of proline imidic peptide bonds in oligopeptides. The sequence is that of Peptidyl-prolyl cis-trans isomerase FKBP1A (Fkbp1a) from Rattus norvegicus (Rat).